Here is a 235-residue protein sequence, read N- to C-terminus: Enolase-phosphatase E1 (235 aa).

Residues Asp10 and Glu12 each coordinate Mg(2+). Residues 130–131 and Lys169 contribute to the substrate site; that span reads SS. Asp194 lines the Mg(2+) pocket.

This sequence belongs to the HAD-like hydrolase superfamily. MasA/MtnC family. As to quaternary structure, monomer. Mg(2+) is required as a cofactor.

The protein resides in the cytoplasm. It localises to the nucleus. The catalysed reaction is 5-methylsulfanyl-2,3-dioxopentyl phosphate + H2O = 1,2-dihydroxy-5-(methylsulfanyl)pent-1-en-3-one + phosphate. The protein operates within amino-acid biosynthesis; L-methionine biosynthesis via salvage pathway; L-methionine from S-methyl-5-thio-alpha-D-ribose 1-phosphate: step 3/6. It participates in amino-acid biosynthesis; L-methionine biosynthesis via salvage pathway; L-methionine from S-methyl-5-thio-alpha-D-ribose 1-phosphate: step 4/6. Functionally, bifunctional enzyme that catalyzes the enolization of 2,3-diketo-5-methylthiopentyl-1-phosphate (DK-MTP-1-P) into the intermediate 2-hydroxy-3-keto-5-methylthiopentenyl-1-phosphate (HK-MTPenyl-1-P), which is then dephosphorylated to form the acireductone 1,2-dihydroxy-3-keto-5-methylthiopentene (DHK-MTPene). In Komagataella phaffii (strain GS115 / ATCC 20864) (Yeast), this protein is Enolase-phosphatase E1.